The primary structure comprises 366 residues: Ferredoxin--NADP reductase, leaf isozyme 2, chloroplastic (366 aa).

The N-terminal 48 residues, 1-48 (MAAVNTVSSLPCSKAGAAVAGGAPRPSTCSVFYPPRCWSKRSSGNGVR), are a transit peptide targeting the chloroplast. An FAD-binding FR-type domain is found at 87–209 (KEPYTGRCLL…TGPVGKEMLM (123 aa)). FAD-binding positions include 145–148 (RLYS), 166–168 (CVK), tyrosine 172, and 183–185 (VCS). The NADP(+) site is built by serine 148 and lysine 168. An intrachain disulfide couples cysteine 184 to cysteine 189. Serine 185 is modified (phosphoserine). The residue at position 216 (threonine 216) is a Phosphothreonine. Threonine 224 provides a ligand contact to FAD. NADP(+) is bound by residues threonine 224, 256–257 (VP), 286–287 (SR), lysine 296, 325–326 (GL), and glutamate 364.

This sequence belongs to the ferredoxin--NADP reductase type 1 family. Heterodimer with LFNR1. Component of high molecular weight thylakoid LFNRs-containing protein complexes containing LIR1, LFNR1, LFNR2, TIC62 and TROL proteins. Interacts directly with LIR1 and TIC62; LIR1 increases the affinity of LFNR1 and LFNR2 for TIC62. FAD is required as a cofactor. Post-translationally, may form interchain disulfide bonds with LIR1.

It is found in the plastid. The protein localises to the chloroplast stroma. It localises to the chloroplast thylakoid membrane. It catalyses the reaction 2 reduced [2Fe-2S]-[ferredoxin] + NADP(+) + H(+) = 2 oxidized [2Fe-2S]-[ferredoxin] + NADPH. It participates in energy metabolism; photosynthesis. Functionally, plays a key role in regulating the relative amounts of cyclic and non-cyclic electron flow to meet the demands of the plant for ATP and reducing power. The protein is Ferredoxin--NADP reductase, leaf isozyme 2, chloroplastic of Oryza sativa subsp. japonica (Rice).